The chain runs to 588 residues: MGGLEKKKYERGSATNYITRNKARKKLQLSLADFRRLCILKGIYPHEPKHKKKVNKGSTAARTFYLIKDIRFLLHEPIVNKFREYKVFVRKLRKAYGKSEWNTVERLKDNKPNYKLDHIIKERYPTFIDALRDLDDALSMCFLFSTFPRTGKCHVQTIQLCRRLTVEFMHYIIAARALRKVFLSIKGIYYQAEVLGQPIVWITPYAFSHDHPTDVDYRVMATFTEFYTTLLGFVNFRLYQLLNLHYPPKLEGQAQAEAKAGEGTYALDSESCMEKLAALSASLARVVVPATEEEAEVDEFPTDGEMSAQEEDRRKELEAQEKHKKLFEGLKFFLNREVPREALAFIIRSFGGEVSWDKSLCIGATYDVTDSRITHQIVDRPGQQTSVIGRCYVQPQWVFDSVNARLLLPVAEYFSGVQLPPHLSPFVTEKEGDYVPPEKLKLLALQRGEDPGNLNESEEEEEEDDNNEGDGDEEGENEEEEEDAEAGSEKEEEARLAALEEQRMEGKKPRVMAGTLKLEDKQRLAQEEESEAKRLAIMMMKKREKYLYQKIMFGKRRKIREANKLAEKRKAHDEAVRSEKKAKKARPE.

The required for 28S ribosomal RNA processing stretch occupies residues Met-1–Val-54. The interval Met-1 to Glu-257 is sufficient for nucleolar localization. Lys-98 is modified (N6-acetyllysine). Positions Glu-294–Arg-314 are disordered. Residues Met-306–Ser-415 are sufficient for interaction with MAP1B. Positions Lys-322–Ser-415 constitute a BRCT domain. Residues Gly-448–Thr-515 form a disordered region. Residues Glu-456–Ala-486 are compositionally biased toward acidic residues. Residues Gly-487–Lys-508 show a composition bias toward basic and acidic residues. Lys-517 participates in a covalent cross-link: Glycyl lysine isopeptide (Lys-Gly) (interchain with G-Cter in SUMO1); alternate. Lys-517 participates in a covalent cross-link: Glycyl lysine isopeptide (Lys-Gly) (interchain with G-Cter in SUMO2); alternate. Residues Met-539–Glu-588 are required for 28S ribosomal RNA processing. Residues Leu-565 to Glu-588 form a disordered region.

Belongs to the pescadillo family. Component of the PeBoW complex, composed of BOP1, PES1 and WDR12. The complex is held together by BOP1, which interacts with PES1 via its N-terminal domain and with WDR12 via a high-affinity interaction between the seven-bladed beta-propeller domains of the 2 proteins. The PeBoW complex associates with the 66S pre-ribosome. The PeBoW complex also associates with DDX27, PES1 interacts directly with DDX27. Interacts with IRS1 and UBTF. May interact with MAP1B. Sumoylated. Significant levels are detected in a variety of cancer cell lines, including glioblastoma, breast carcinoma, colon carcinoma and cervical carcinoma cells. Levels are abnormally elevated in malignant tumors of astrocytic origin.

It is found in the nucleus. It localises to the nucleolus. The protein localises to the nucleoplasm. Its subcellular location is the chromosome. In terms of biological role, component of the PeBoW complex, which is required for maturation of 28S and 5.8S ribosomal RNAs and formation of the 60S ribosome. The chain is Pescadillo homolog from Homo sapiens (Human).